Consider the following 101-residue polypeptide: Small ribosomal subunit protein uS14 (101 aa).

A compositionally biased stretch (basic and acidic residues) spans 1-10; sequence MAKKSSIEKN. Residues 1–23 are disordered; the sequence is MAKKSSIEKNNRRKRMTGNAAAK.

It belongs to the universal ribosomal protein uS14 family. As to quaternary structure, part of the 30S ribosomal subunit. Contacts proteins S3 and S10.

In terms of biological role, binds 16S rRNA, required for the assembly of 30S particles and may also be responsible for determining the conformation of the 16S rRNA at the A site. The polypeptide is Small ribosomal subunit protein uS14 (Nitrobacter hamburgensis (strain DSM 10229 / NCIMB 13809 / X14)).